The primary structure comprises 95 residues: Protein TusB (95 aa).

Belongs to the DsrH/TusB family. In terms of assembly, heterohexamer, formed by a dimer of trimers. The hexameric TusBCD complex contains 2 copies each of TusB, TusC and TusD. The TusBCD complex interacts with TusE.

Its subcellular location is the cytoplasm. Part of a sulfur-relay system required for 2-thiolation of 5-methylaminomethyl-2-thiouridine (mnm(5)s(2)U) at tRNA wobble positions. In Yersinia pseudotuberculosis serotype O:1b (strain IP 31758), this protein is Protein TusB.